Consider the following 241-residue polypeptide: MSNKNVNVRKSQEITFCLLAGILMFMAMVVAGRAEAGVALGATRVIYPAGQKQVQLAVTNNDENSTYLIQSWVENADGVKDGRFIVTPPLFAMKGKKENTLRILDATNNQLPQDRESLFWMNVKAIPSMDKSKLTENTLQLAIISRIKLYYRPAKLALPPDQAAEKLRFRRSANSLTLINPTPYYLTVTELNAGTRVLENALVPPMGESAVKLPSDAGSNITYRTINDYGALTPKMTGVME.

The N-terminal stretch at 1–36 (MSNKNVNVRKSQEITFCLLAGILMFMAMVVAGRAEA) is a signal peptide.

The protein belongs to the periplasmic pilus chaperone family.

Its subcellular location is the periplasm. In terms of biological role, required for the biogenesis of type 1 fimbriae. Binds and interact with FimH. The protein is Chaperone protein FimC (fimC) of Escherichia coli O6:H1 (strain CFT073 / ATCC 700928 / UPEC).